We begin with the raw amino-acid sequence, 798 residues long: Peregrinol diphosphate synthase TPS1, chloroplastic (798 aa).

The transit peptide at 1 to 25 directs the protein to the chloroplast; that stretch reads MASLSTPNINNTTFVNSKTQLPAVK. A substrate-binding site is contributed by Lys243. Mg(2+)-binding residues include Asp377 and Asp379. The short motif at 377–380 is the DXDD motif element; that stretch reads DLDD. A substrate-binding site is contributed by Lys463.

The protein belongs to the terpene synthase family. Mg(2+) is required as a cofactor. As to expression, mostly expressed in trichomes of leaves and fruits.

It localises to the plastid. Its subcellular location is the chloroplast. The enzyme catalyses peregrinol diphosphate = (2E,6E,10E)-geranylgeranyl diphosphate + H2O. It functions in the pathway secondary metabolite biosynthesis; terpenoid biosynthesis. Its function is as follows. Involved in the biosynthesis of labdane-type diterpenoid including cleroda-dienols, and peregrinol lactones and furan derivatives, dopaminergic diterpenoids that can bind to dopamine receptors in the human pituitary gland, have probably ability to lower prolactin levels, and are used to treat menstrual cycle disorders (e.g. premenstrual syndrome and mastodynia). Terpene synthase that produces peregrinol diphosphate from geranylgeranyl diphosphate (GGPP). This Vitex agnus-castus (Chaste tree) protein is Peregrinol diphosphate synthase TPS1, chloroplastic.